Reading from the N-terminus, the 196-residue chain is Peptidyl-tRNA hydrolase (196 aa).

Position 17 (Tyr-17) interacts with tRNA. The Proton acceptor role is filled by His-22. TRNA contacts are provided by Phe-68, Asn-70, and Asn-116.

It belongs to the PTH family. Monomer.

The protein localises to the cytoplasm. It carries out the reaction an N-acyl-L-alpha-aminoacyl-tRNA + H2O = an N-acyl-L-amino acid + a tRNA + H(+). Functionally, hydrolyzes ribosome-free peptidyl-tRNAs (with 1 or more amino acids incorporated), which drop off the ribosome during protein synthesis, or as a result of ribosome stalling. In terms of biological role, catalyzes the release of premature peptidyl moieties from peptidyl-tRNA molecules trapped in stalled 50S ribosomal subunits, and thus maintains levels of free tRNAs and 50S ribosomes. This chain is Peptidyl-tRNA hydrolase, found in Photorhabdus laumondii subsp. laumondii (strain DSM 15139 / CIP 105565 / TT01) (Photorhabdus luminescens subsp. laumondii).